We begin with the raw amino-acid sequence, 314 residues long: Probable dimethyladenosine transferase (314 aa).

Residues histidine 36, leucine 38, glycine 63, glutamate 84, aspartate 112, and asparagine 127 each coordinate S-adenosyl-L-methionine.

Belongs to the class I-like SAM-binding methyltransferase superfamily. rRNA adenine N(6)-methyltransferase family. Part of the small subunit (SSU) processome, composed of more than 70 proteins and the RNA chaperone small nucleolar RNA (snoRNA) U3.

It localises to the nucleus. Its subcellular location is the nucleoplasm. The protein resides in the nucleolus. The enzyme catalyses adenosine(1779)/adenosine(1780) in 18S rRNA + 4 S-adenosyl-L-methionine = N(6)-dimethyladenosine(1779)/N(6)-dimethyladenosine(1780) in 18S rRNA + 4 S-adenosyl-L-homocysteine + 4 H(+). Functionally, specifically dimethylates two adjacent adenosines in the loop of a conserved hairpin near the 3'-end of 18S rRNA in the 40S particle. Involved in the pre-rRNA processing steps leading to small-subunit rRNA production independently of its RNA-modifying catalytic activity. Part of the small subunit (SSU) processome, first precursor of the small eukaryotic ribosomal subunit. During the assembly of the SSU processome in the nucleolus, many ribosome biogenesis factors, an RNA chaperone and ribosomal proteins associate with the nascent pre-rRNA and work in concert to generate RNA folding, modifications, rearrangements and cleavage as well as targeted degradation of pre-ribosomal RNA by the RNA exosome. In Dictyostelium discoideum (Social amoeba), this protein is Probable dimethyladenosine transferase (dimt1).